The sequence spans 399 residues: Tryptophan synthase beta chain (399 aa).

Lysine 90 bears the N6-(pyridoxal phosphate)lysine mark.

It belongs to the TrpB family. As to quaternary structure, tetramer of two alpha and two beta chains. Requires pyridoxal 5'-phosphate as cofactor.

The catalysed reaction is (1S,2R)-1-C-(indol-3-yl)glycerol 3-phosphate + L-serine = D-glyceraldehyde 3-phosphate + L-tryptophan + H2O. Its pathway is amino-acid biosynthesis; L-tryptophan biosynthesis; L-tryptophan from chorismate: step 5/5. Functionally, the beta subunit is responsible for the synthesis of L-tryptophan from indole and L-serine. This is Tryptophan synthase beta chain from Bacillus pumilus (strain SAFR-032).